The sequence spans 357 residues: sn-glycerol-3-phosphate import ATP-binding protein UgpC (357 aa).

An ABC transporter domain is found at 4–235 (LKLQAVTKSY…PASLFVASFI (232 aa)). 37-44 (GPSGCGKS) serves as a coordination point for ATP.

It belongs to the ABC transporter superfamily. sn-glycerol-3-phosphate importer (TC 3.A.1.1.3) family. The complex is composed of two ATP-binding proteins (UgpC), two transmembrane proteins (UgpA and UgpE) and a solute-binding protein (UgpB).

It localises to the cell inner membrane. The catalysed reaction is sn-glycerol 3-phosphate(out) + ATP + H2O = sn-glycerol 3-phosphate(in) + ADP + phosphate + H(+). In terms of biological role, part of the ABC transporter complex UgpBAEC involved in sn-glycerol-3-phosphate (G3P) import. Responsible for energy coupling to the transport system. This chain is sn-glycerol-3-phosphate import ATP-binding protein UgpC, found in Yersinia pestis bv. Antiqua (strain Antiqua).